The chain runs to 439 residues: Ribosomal protein uS12 methylthiotransferase RimO (439 aa).

Positions 5 to 115 constitute an MTTase N-terminal domain; that stretch reads PRISFTSLGC…VLDAVHRALP (111 aa). [4Fe-4S] cluster is bound by residues C14, C50, C79, C146, C150, and C153. The Radical SAM core domain maps to 132 to 369; that stretch reads LTPRHYAYLK…MARQQKISAR (238 aa). Residues 372–438 enclose the TRAM domain; that stretch reads KRKVGTRQQI…QYDLHGSVAG (67 aa).

This sequence belongs to the methylthiotransferase family. RimO subfamily. [4Fe-4S] cluster serves as cofactor.

It localises to the cytoplasm. It catalyses the reaction L-aspartate(89)-[ribosomal protein uS12]-hydrogen + (sulfur carrier)-SH + AH2 + 2 S-adenosyl-L-methionine = 3-methylsulfanyl-L-aspartate(89)-[ribosomal protein uS12]-hydrogen + (sulfur carrier)-H + 5'-deoxyadenosine + L-methionine + A + S-adenosyl-L-homocysteine + 2 H(+). Functionally, catalyzes the methylthiolation of an aspartic acid residue of ribosomal protein uS12. This chain is Ribosomal protein uS12 methylthiotransferase RimO, found in Bradyrhizobium diazoefficiens (strain JCM 10833 / BCRC 13528 / IAM 13628 / NBRC 14792 / USDA 110).